We begin with the raw amino-acid sequence, 292 residues long: 2-hydroxy-3-oxopropionate reductase (292 aa).

NAD(+) contacts are provided by residues 4–18 (GFIGLGIMGTPMAIN) and S94. Residue K169 is part of the active site. K237 contacts NAD(+).

This sequence belongs to the HIBADH-related family.

The enzyme catalyses (R)-glycerate + NADP(+) = 2-hydroxy-3-oxopropanoate + NADPH + H(+). It catalyses the reaction (R)-glycerate + NAD(+) = 2-hydroxy-3-oxopropanoate + NADH + H(+). The protein operates within organic acid metabolism; glycolate degradation; 3-phospho-D-glycerate from glycolate: step 3/4. The polypeptide is 2-hydroxy-3-oxopropionate reductase (glxR) (Escherichia coli (strain K12)).